Reading from the N-terminus, the 262-residue chain is Serine/arginine-rich SC35-like splicing factor SCL30 (262 aa).

Low complexity predominate over residues 1–14 (MRRYSPPYYSPPRR). Disordered regions lie at residues 1–48 (MRRY…SHGS) and 123–262 (ASES…VSPR). 3 positions are modified to phosphoserine: Ser5, Ser10, and Ser22. Over residues 31 to 42 (GYGGGGGGGGRR) the composition is skewed to gly residues. Residues 47–125 (GSLLVRNIPL…REITVVVASE (79 aa)) enclose the RRM domain. A compositionally biased stretch (basic and acidic residues) spans 125 to 152 (ESRKRPEEMRVKTRTRSREPSGSRDRSH). Basic residues predominate over residues 153–167 (GRSRSRSISRSRSPR). Phosphoserine is present on residues Ser182, Ser204, and Ser206. The residue at position 209 (Tyr209) is a Phosphotyrosine. Residues 217–239 (PDRDRNGDNEIREKPGYEAEDRR) are compositionally biased toward basic and acidic residues. Residues 243-262 (RAVSRSPSGSRSRSVEVSPR) are compositionally biased toward low complexity. Phosphoserine is present on residues Ser254, Ser256, and Ser260.

The protein belongs to the splicing factor SR family. SCL subfamily. Component of the spliceosome. Interacts with RS2Z33, CYP59, CYP63 and CYP95. Phosphorylated.

The protein localises to the nucleus speckle. In terms of biological role, involved in intron recognition and spliceosome assembly. Probably active at the 5' splice sites. The sequence is that of Serine/arginine-rich SC35-like splicing factor SCL30 (SCL30) from Arabidopsis thaliana (Mouse-ear cress).